The chain runs to 511 residues: Zinc finger and BTB domain-containing protein 45 (511 aa).

Positions Cys33–Gln96 constitute a BTB domain. The span at Ala159–Ala168 shows a compositional bias: low complexity. Disordered stretches follow at residues Ala159–Ala241 and Glu294–Tyr403. The span at Arg206–Glu224 shows a compositional bias: acidic residues. Residues Pro339–Phe360 are compositionally biased toward pro residues. Over residues Pro378 to Gly397 the composition is skewed to low complexity. 4 consecutive C2H2-type zinc fingers follow at residues Tyr403–His425, His431–His453, Phe459–His481, and Ala486–His508.

It belongs to the krueppel C2H2-type zinc-finger protein family.

It localises to the nucleus. Its function is as follows. May be involved in transcriptional regulation. In the central nervous system, may play a role in glial cell differentiation. The polypeptide is Zinc finger and BTB domain-containing protein 45 (ZBTB45) (Homo sapiens (Human)).